The following is a 275-amino-acid chain: Diaminopimelate epimerase (275 aa).

The substrate site is built by Asn12, Gln45, and Asn65. The active-site Proton donor is Cys74. Substrate-binding positions include Gly75 to Asn76, Asn158, Asn191, and Glu209 to Arg210. Cys218 functions as the Proton acceptor in the catalytic mechanism. Gly219–Thr220 contacts substrate.

The protein belongs to the diaminopimelate epimerase family. In terms of assembly, homodimer.

Its subcellular location is the cytoplasm. It catalyses the reaction (2S,6S)-2,6-diaminopimelate = meso-2,6-diaminopimelate. It functions in the pathway amino-acid biosynthesis; L-lysine biosynthesis via DAP pathway; DL-2,6-diaminopimelate from LL-2,6-diaminopimelate: step 1/1. Catalyzes the stereoinversion of LL-2,6-diaminopimelate (L,L-DAP) to meso-diaminopimelate (meso-DAP), a precursor of L-lysine and an essential component of the bacterial peptidoglycan. This chain is Diaminopimelate epimerase, found in Shewanella denitrificans (strain OS217 / ATCC BAA-1090 / DSM 15013).